A 52-amino-acid chain; its full sequence is Alpha-1-antiproteinase 3 (52 aa).

The disordered stretch occupies residues 1–20 (EDLQGDAVPEEXATKDDNEH).

Belongs to the serpin family. N-glycosylated; contains glycans with bi- and triantennary side chains. As to expression, plasma.

It is found in the secreted. This chain is Alpha-1-antiproteinase 3, found in Equus caballus (Horse).